A 386-amino-acid polypeptide reads, in one-letter code: MEVISTNTNGSTIFKNGAIPMNGHQSGTSKHLNGYQNGTSKHQNGHHNGTSEHRNGHQNGISEHQNGHQNGTSEQQNGTISHDNGNELLGNSNSIKLGWFSEFSALWPGEAFSLKVEKLLFQGKSDYQDVMLFESATYGKVLTLDGAIQHTENGGFPYTEMIVHLPLGSIPNPKKVLIIGGGIGFTLFEMLRYPTIEKIDIVEIDDVVVDVSRKSFPYLAANFNDPRVTLVLGDGAAFVKAAQAGYYDAIIVDSSDPIGPAKDLFERPFFEAVAKALRPGGVVCTQAESIWLHMHIIKQIIANCRQVFKGSVNYAWTTVPTYPTGVIGYMLCSTEGPEVDFKNPINPIDKETTQVKSKLAPLKFYNSDIHKAAFILPSFARSMIES.

3 stretches are compositionally biased toward polar residues: residues 1–14 (MEVISTNTNGSTIF), 23–48 (GHQSGTSKHLNGYQNGTSKHQNGHHN), and 57–87 (HQNGISEHQNGHQNGTSEQQNGTISHDNGNE). The interval 1-87 (MEVISTNTNG…GTISHDNGNE (87 aa)) is disordered. Residues 97–334 (LGWFSEFSAL…GVIGYMLCST (238 aa)) enclose the PABS domain. Residues Gln128, Glu203, and 234 to 235 (DG) contribute to the S-adenosyl-L-methionine site. Asp253 serves as the catalytic Proton acceptor. An S-adenosyl-L-methionine-binding site is contributed by Tyr322.

This sequence belongs to the class I-like SAM-binding methyltransferase superfamily. Putrescine methyltransferase family. In terms of tissue distribution, predominantly expressed in roots.

The enzyme catalyses putrescine + S-adenosyl-L-methionine = N-methylputrescine + S-adenosyl-L-homocysteine + H(+). It participates in alkaloid biosynthesis; nicotine biosynthesis. In terms of biological role, involved in the biosynthesis of pyridine alkaloid natural products, leading mainly to the production of anabasine, anatabine, nicotine and nornicotine, effective deterrents against herbivores with antiparasitic and pesticide properties (neurotoxins); nornicotine serves as the precursor in the synthesis of the carcinogen compound N'-nitrosonornicotine (NNN). Methyltransferase that mediates the conversion of putrescine to N-methylputrescine. Promotes leaves ripening. In Nicotiana tabacum (Common tobacco), this protein is Putrescine N-methyltransferase 4.